Consider the following 248-residue polypeptide: Tyrosine recombinase XerD-like (248 aa).

The region spanning 1–72 (MKSYIEPFIA…TANQFLYYLY (72 aa)) is the Core-binding (CB) domain. The 164-residue stretch at 85–248 (DTMKVMRTEK…PVTLEKYYKS (164 aa)) folds into the Tyr recombinase domain. Catalysis depends on residues lysine 149 and arginine 213. Tyrosine 245 acts as the O-(3'-phospho-DNA)-tyrosine intermediate in catalysis.

This sequence belongs to the 'phage' integrase family. XerD-like subfamily.

The protein resides in the cytoplasm. Putative tyrosine recombinase. Not involved in the cutting and rejoining of the recombining DNA molecules on dif(SL) site. The chain is Tyrosine recombinase XerD-like from Streptococcus pyogenes serotype M3 (strain ATCC BAA-595 / MGAS315).